The chain runs to 715 residues: Fatty acid oxidation complex subunit alpha (715 aa).

Positions 1-190 (MTTTSAFMLN…KAGLVDDVVP (190 aa)) are enoyl-CoA hydratase. Positions 306 to 715 (GPLNSVGILG…WTNGETDQGN (410 aa)) are 3-hydroxyacyl-CoA dehydrogenase.

It in the N-terminal section; belongs to the enoyl-CoA hydratase/isomerase family. The protein in the central section; belongs to the 3-hydroxyacyl-CoA dehydrogenase family. In terms of assembly, heterotetramer of two alpha chains (FadJ) and two beta chains (FadI).

It is found in the cytoplasm. The catalysed reaction is a (3S)-3-hydroxyacyl-CoA = a (2E)-enoyl-CoA + H2O. It carries out the reaction a 4-saturated-(3S)-3-hydroxyacyl-CoA = a (3E)-enoyl-CoA + H2O. The enzyme catalyses a (3S)-3-hydroxyacyl-CoA + NAD(+) = a 3-oxoacyl-CoA + NADH + H(+). It catalyses the reaction (3S)-3-hydroxybutanoyl-CoA = (3R)-3-hydroxybutanoyl-CoA. It participates in lipid metabolism; fatty acid beta-oxidation. Its function is as follows. Catalyzes the formation of a hydroxyacyl-CoA by addition of water on enoyl-CoA. Also exhibits 3-hydroxyacyl-CoA epimerase and 3-hydroxyacyl-CoA dehydrogenase activities. This is Fatty acid oxidation complex subunit alpha from Salmonella agona (strain SL483).